The following is a 362-amino-acid chain: MLRFPHVCGLCLLLKYWQILALAPFRTSEPMVARCQRWMTLIAVFRWLLLTSMAPFVLWKSAAMYEATNVRHSMVFKTIALATMTGDVCISLALLGNHLWNRRELANLVNDLARLHRRRRLSWWSTLFLWLKLLLSLYDLLCSVPFLKGAGGRLPWSQLVAYGVQLYFQHVASVYGNGIFGGILLMLECYNQLEREEPTNLARLLQKEYSWLRLIQRFVKLFQLGIFLLVLGSFVNIMVNIYAFMSYYVSLHGVPLTISNNCLVLAIQLYAVILAAHLCQVRSAKLRKKCLQLEYVPEGLTQEQAMASTPFPVLTPTGNVKFRILGVFILDNSFWLFLVSYAMNFIVVILQTSFEHINHGEI.

Over 1-38 (MLRFPHVCGLCLLLKYWQILALAPFRTSEPMVARCQRW) the chain is Cytoplasmic. Residues 39–59 (MTLIAVFRWLLLTSMAPFVLW) traverse the membrane as a helical segment. Residues 60 to 74 (KSAAMYEATNVRHSM) lie on the Extracellular side of the membrane. Residues 75–95 (VFKTIALATMTGDVCISLALL) form a helical membrane-spanning segment. Residues 96–126 (GNHLWNRRELANLVNDLARLHRRRRLSWWST) lie on the Cytoplasmic side of the membrane. Residues 127–147 (LFLWLKLLLSLYDLLCSVPFL) traverse the membrane as a helical segment. Residues 148 to 166 (KGAGGRLPWSQLVAYGVQL) are Extracellular-facing. The chain crosses the membrane as a helical span at residues 167–187 (YFQHVASVYGNGIFGGILLML). Residues 188–223 (ECYNQLEREEPTNLARLLQKEYSWLRLIQRFVKLFQ) are Cytoplasmic-facing. The chain crosses the membrane as a helical span at residues 224-244 (LGIFLLVLGSFVNIMVNIYAF). At 245 to 255 (MSYYVSLHGVP) the chain is on the extracellular side. A helical transmembrane segment spans residues 256 to 276 (LTISNNCLVLAIQLYAVILAA). The Cytoplasmic portion of the chain corresponds to 277 to 333 (HLCQVRSAKLRKKCLQLEYVPEGLTQEQAMASTPFPVLTPTGNVKFRILGVFILDNS). Residues 334–354 (FWLFLVSYAMNFIVVILQTSF) form a helical membrane-spanning segment. Over 355 to 362 (EHINHGEI) the chain is Extracellular.

This sequence belongs to the insect chemoreceptor superfamily. Gustatory receptor (GR) family. Gr77a subfamily.

The protein resides in the cell membrane. Probable gustatory receptor which mediates acceptance or avoidance behavior, depending on its substrates. This is Putative gustatory receptor 89a (Gr89a) from Drosophila melanogaster (Fruit fly).